A 180-amino-acid polypeptide reads, in one-letter code: NADH-quinone oxidoreductase subunit I (180 aa).

2 4Fe-4S ferredoxin-type domains span residues 50–80 and 90–119; these read LTRD…LQKA and EFFR…LTPD. Residues Cys-60, Cys-63, Cys-66, Cys-70, Cys-99, Cys-102, Cys-105, and Cys-109 each coordinate [4Fe-4S] cluster.

This sequence belongs to the complex I 23 kDa subunit family. As to quaternary structure, NDH-1 is composed of 14 different subunits. Subunits NuoA, H, J, K, L, M, N constitute the membrane sector of the complex. Requires [4Fe-4S] cluster as cofactor.

It localises to the cell inner membrane. The catalysed reaction is a quinone + NADH + 5 H(+)(in) = a quinol + NAD(+) + 4 H(+)(out). NDH-1 shuttles electrons from NADH, via FMN and iron-sulfur (Fe-S) centers, to quinones in the respiratory chain. The immediate electron acceptor for the enzyme in this species is believed to be ubiquinone. Couples the redox reaction to proton translocation (for every two electrons transferred, four hydrogen ions are translocated across the cytoplasmic membrane), and thus conserves the redox energy in a proton gradient. The chain is NADH-quinone oxidoreductase subunit I from Acinetobacter baumannii (strain ACICU).